The chain runs to 313 residues: MMQITMENKSSVSEFILMGLTDQPELQLPLFVLFLMNYTATVMGNLTLMNLICLNSNLHTPMYFFLFNLSFIDFCYSMVFTPKMLMSFILEKNTISFGGCMAQLFFFLFFVNSESYVLTAMAYDRYVAICKPLTYKVIMSPKICCLLIFSSYLMGFASAMAHTGCMIRLSFCDSNIINHYMCDIFPLLPLSCSSTYVNELMSSVVVGSAIILCCLIILISYAMILFNIIHMSSGKGWSKALGTCGSHIITVSLFYGSGLLAYVKPSSAKTVGQGKFFSVFYTLLVPMLNPLIYSLRNKDVKLAVKKTWKRITS.

Over 1-27 the chain is Extracellular; it reads MMQITMENKSSVSEFILMGLTDQPELQ. Residue asparagine 8 is glycosylated (N-linked (GlcNAc...) asparagine). Residues 28–48 traverse the membrane as a helical segment; the sequence is LPLFVLFLMNYTATVMGNLTL. The Cytoplasmic segment spans residues 49–59; the sequence is MNLICLNSNLH. The chain crosses the membrane as a helical span at residues 60–80; it reads TPMYFFLFNLSFIDFCYSMVF. At 81-96 the chain is on the extracellular side; the sequence is TPKMLMSFILEKNTIS. A helical transmembrane segment spans residues 97–117; sequence FGGCMAQLFFFLFFVNSESYV. A disulfide bridge links cysteine 100 with cysteine 192. The Cytoplasmic segment spans residues 118–136; sequence LTAMAYDRYVAICKPLTYK. Residues 137–157 form a helical membrane-spanning segment; it reads VIMSPKICCLLIFSSYLMGFA. Over 158-208 the chain is Extracellular; the sequence is SAMAHTGCMIRLSFCDSNIINHYMCDIFPLLPLSCSSTYVNELMSSVVVGS. The chain crosses the membrane as a helical span at residues 209–229; the sequence is AIILCCLIILISYAMILFNII. At 230–239 the chain is on the cytoplasmic side; that stretch reads HMSSGKGWSK. A helical membrane pass occupies residues 240-260; it reads ALGTCGSHIITVSLFYGSGLL. Residues 261–274 are Extracellular-facing; that stretch reads AYVKPSSAKTVGQG. The chain crosses the membrane as a helical span at residues 275–295; the sequence is KFFSVFYTLLVPMLNPLIYSL. Residues 296–313 are Cytoplasmic-facing; that stretch reads RNKDVKLAVKKTWKRITS.

This sequence belongs to the G-protein coupled receptor 1 family. Expressed in neurons in the olfactory epithelium.

Its subcellular location is the cell membrane. Potential odorant receptor. The protein is Olfactory receptor 8C8 of Mus musculus (Mouse).